The following is an 86-amino-acid chain: Latartoxin-1b (86 aa).

Positions 1–19 (MKILVLAVVCTVLLQVALS) are cleaved as a signal peptide. Residues 20–26 (ADSEEVR) constitute a propeptide, removed in mature form. Residues 23-26 (EEVR) carry the Processing quadruplet motif motif. Cystine bridges form between Cys-28–Cys-43, Cys-35–Cys-48, Cys-42–Cys-65, and Cys-50–Cys-63.

It belongs to the neurotoxin 19 (CSTX) family. Contains 4 disulfide bonds. Post-translationally, cleavage of the propeptide depends on the processing quadruplet motif (XXXR, with at least one of X being E). As to expression, expressed by the venom gland.

The protein localises to the secreted. Functionally, insect toxin. The polypeptide is Latartoxin-1b (Lachesana tarabaevi (Spider)).